The following is a 1061-amino-acid chain: Atrial natriuretic peptide receptor 1 (1061 aa).

The first 32 residues, 1–32 (MPGPRRPAGSRLRLLLLLLLPPLLLLLRGSHA), serve as a signal peptide directing secretion. The Extracellular portion of the chain corresponds to 33–473 (GNLTVAVVLP…CNQDHLSTLE (441 aa)). N-linked (GlcNAc...) asparagine glycosylation is found at N34 and N45. 3 residues coordinate chloride: S85, G117, and C118. Disulfide bonds link C92/C118 and C196/C245. N-linked (GlcNAc...) asparagine glycosylation is found at N212, N338, N379, N386, and N427. The cysteines at positions 455 and 464 are disulfide-linked. Residues 474-494 (VLALVGSLSLLGILIVSFFIY) traverse the membrane as a helical segment. Over 495–1061 (RKMQLEKELA…LGERGSSTRG (567 aa)) the chain is Cytoplasmic. Phosphoserine is present on residues S519 and S529. Positions 528 to 805 (GSRLTLSGRG…QIRLTLRKFN (278 aa)) constitute a Protein kinase domain. T532 carries the post-translational modification Phosphothreonine. 3 positions are modified to phosphoserine: S534, S538, and S542. Phosphothreonine is present on T545. Residues 876–1006 (TIYFSDIVGF…DTVNTASRME (131 aa)) form the Guanylate cyclase domain.

Belongs to the adenylyl cyclase class-4/guanylyl cyclase family. In terms of assembly, homodimer. Phosphorylation of the protein kinase-like domain is required for full activation by ANP.

The protein localises to the membrane. It catalyses the reaction GTP = 3',5'-cyclic GMP + diphosphate. Functionally, receptor for the atrial natriuretic peptide NPPA/ANP and the brain natriuretic peptide NPPB/BNP which are potent vasoactive hormones playing a key role in cardiovascular homeostasis. Plays an essential role in the regulation of endothelial cell senescence and vascular aging. Upon activation by ANP or BNP, stimulates the production of cyclic guanosine monophosphate (cGMP) that promotes vascular tone and volume homeostasis by activation of protein kinase cGMP-dependent 1/PRKG1 and subsequently PRKAA1, thereby controlling blood pressure and maintaining cardiovascular homeostasis. The sequence is that of Atrial natriuretic peptide receptor 1 from Homo sapiens (Human).